The sequence spans 252 residues: Cell division protein ZapD (252 aa).

It belongs to the ZapD family. In terms of assembly, interacts with FtsZ.

It is found in the cytoplasm. Its function is as follows. Cell division factor that enhances FtsZ-ring assembly. Directly interacts with FtsZ and promotes bundling of FtsZ protofilaments, with a reduction in FtsZ GTPase activity. The protein is Cell division protein ZapD of Ralstonia pickettii (strain 12J).